The sequence spans 261 residues: UPF0328 protein ECU03_1620 (261 aa).

The protein belongs to the UPF0328 family.

The protein is UPF0328 protein ECU03_1620 of Encephalitozoon cuniculi (strain GB-M1) (Microsporidian parasite).